A 341-amino-acid chain; its full sequence is Fructose-1,6-bisphosphatase, cytosolic (341 aa).

Positions 71, 100, 121, 123, and 124 each coordinate Mg(2+). Substrate is bound by residues 124-127 (DGSS), Asn-215, Tyr-247, Tyr-267, and Lys-277. Mg(2+) is bound at residue Glu-283.

This sequence belongs to the FBPase class 1 family. Requires Mg(2+) as cofactor.

Its subcellular location is the cytoplasm. The enzyme catalyses beta-D-fructose 1,6-bisphosphate + H2O = beta-D-fructose 6-phosphate + phosphate. In Spinacia oleracea (Spinach), this protein is Fructose-1,6-bisphosphatase, cytosolic.